Here is an 89-residue protein sequence, read N- to C-terminus: Conotoxin Lt6.4 (89 aa).

The signal sequence occupies residues 1-22; the sequence is MKLTCVPIVAMLFLMACQLITA. Residues 23-50 constitute a propeptide that is removed on maturation; sequence DYSREKHGYSAEKSSDKIQDSFYSKLTK. Cystine bridges form between Cys52/Cys67, Cys59/Cys71, and Cys66/Cys80.

This sequence belongs to the conotoxin O1 superfamily. As to expression, expressed by the venom duct.

Its subcellular location is the secreted. This Conus litteratus (Lettered cone) protein is Conotoxin Lt6.4.